Consider the following 651-residue polypeptide: MVLAGVAQRPWIKSCDRAFYGSMALSAATTEAPEQTGFWALTLGGIGVVFGDIGTSPLYAFREAVAGAAGGAPASRVLVLGVLSLILWALLIVVTAKYVLLLLRADNNGEGGTLSLMALGRRALGRRSLFLLVLGVIGASMFIGDSMITPAISVLSAIEGLKIAAPALEHYVVPLTVLVLVLLFGVQSHGTAIVARFFGPVMLVWFATLAAMGAMHIMDDPSVLAAINPWYAAQFLASHGTIGLVTLGAVFLAVTGGEALYADLGHFGRRPIQTAWLGFVLPALLINYFGQGALVLSNPAALENPFYKMVPEALVLPLTLMATAATVIASQAVITGAFSLISQAVQLGLLPRFEVRYTSETNAGQIYLPRVNALLLIGVLLLVLLFQTSSRLASAYGIAVSTTMVVDGIMGFVVIWKLWRWSWPAAALVILPLVLVDAMFFSANLLKLLDGAWVPLLFGLAMAVVIWTWRRGVALLMIKSRRAEVPLDDLIGSLEKHPPHIVKGTAVFLTADAEFVPPALLHNLKHNKVLHEHNVILTIETMHTPRVEAADRIRLVKVSEKFSKVALRFGFMETPNVPKALVLARKLGWEFDIMSTSFFVSRRSLKPAAQSEMWRWQTKLFVALAKSANDATDYFQIPTGRVVEVGAQVTI.

12 consecutive transmembrane segments (helical) span residues 38–58 (FWAL…TSPL), 77–97 (VLVL…VTAK), 129–149 (LFLL…SMIT), 166–186 (PALE…LFGV), 197–217 (FFGP…AMHI), 242–262 (IGLV…ALYA), 276–296 (WLGF…ALVL), 314–334 (LVLP…QAVI), 366–386 (IYLP…VLLF), 396–416 (YGIA…VVIW), 421–441 (WSWP…AMFF), and 448–468 (LLDG…VIWT).

This sequence belongs to the HAK/KUP transporter (TC 2.A.72) family.

Its subcellular location is the cell inner membrane. It carries out the reaction K(+)(in) + H(+)(in) = K(+)(out) + H(+)(out). Functionally, transport of potassium into the cell. Likely operates as a K(+):H(+) symporter. The chain is Probable potassium transport system protein Kup 3 from Rhodopseudomonas palustris (strain ATCC BAA-98 / CGA009).